The sequence spans 294 residues: Pyrroline-5-carboxylate reductase (294 aa).

It belongs to the pyrroline-5-carboxylate reductase family.

It localises to the cytoplasm. It catalyses the reaction L-proline + NADP(+) = (S)-1-pyrroline-5-carboxylate + NADPH + 2 H(+). It carries out the reaction L-proline + NAD(+) = (S)-1-pyrroline-5-carboxylate + NADH + 2 H(+). The protein operates within amino-acid biosynthesis; L-proline biosynthesis; L-proline from L-glutamate 5-semialdehyde: step 1/1. Its function is as follows. Catalyzes the reduction of 1-pyrroline-5-carboxylate (PCA) to L-proline. The sequence is that of Pyrroline-5-carboxylate reductase from Mycobacterium leprae (strain TN).